The chain runs to 341 residues: Fructose-1,6-bisphosphatase, cytosolic (341 aa).

Mg(2+) is bound by residues glutamate 71, glutamate 100, aspartate 121, leucine 123, and aspartate 124. Residues 124–127, asparagine 215, tyrosine 247, tyrosine 267, and lysine 277 contribute to the substrate site; that span reads DGSF. A Mg(2+)-binding site is contributed by glutamate 283.

Belongs to the FBPase class 1 family. Requires Mg(2+) as cofactor.

The protein localises to the cytoplasm. It catalyses the reaction beta-D-fructose 1,6-bisphosphate + H2O = beta-D-fructose 6-phosphate + phosphate. In Pisum sativum (Garden pea), this protein is Fructose-1,6-bisphosphatase, cytosolic.